Consider the following 636-residue polypeptide: ABC transporter ATP-binding protein RamA (636 aa).

Helical transmembrane passes span 45–65, 78–98, 175–195, 269–289, and 297–317; these read VLVL…PLAL, AGWW…LDSA, LVDV…ALLL, GVLV…RLAA, and LLAV…ASLL. The ABC transmembrane type-1 domain maps to 45–322; sequence VLVLLCSVAA…AASLLGAIVR (278 aa). Residues 354-585 form the ABC transporter domain; sequence LRLCGVRVLR…AGYREVFGAG (232 aa). 386–393 serves as a coordination point for ATP; that stretch reads GRSGAGKS. Residues 589-606 show a composition bias toward gly residues; that stretch reads GAGAGAGAGADAGAGADA. Positions 589–636 are disordered; the sequence is GAGAGAGAGADAGAGADAGPGPDSGAATAVGGSGPGPVRRPEPEEARP. Over residues 607–618 the composition is skewed to low complexity; sequence GPGPDSGAATAV. A compositionally biased stretch (basic and acidic residues) spans 627–636; it reads RRPEPEEARP.

It belongs to the ABC transporter superfamily.

It is found in the cell membrane. Probably involved in exporting SapB from the cell. Expression of the ram locus (ramA, ramB and ramR) induces rapid aerial mycelium formation in S.lividans. This is ABC transporter ATP-binding protein RamA from Streptomyces coelicolor (strain ATCC BAA-471 / A3(2) / M145).